The primary structure comprises 420 residues: Histidine--tRNA ligase (420 aa).

It belongs to the class-II aminoacyl-tRNA synthetase family. As to quaternary structure, homodimer.

Its subcellular location is the cytoplasm. It catalyses the reaction tRNA(His) + L-histidine + ATP = L-histidyl-tRNA(His) + AMP + diphosphate + H(+). The chain is Histidine--tRNA ligase from Staphylococcus saprophyticus subsp. saprophyticus (strain ATCC 15305 / DSM 20229 / NCIMB 8711 / NCTC 7292 / S-41).